A 56-amino-acid chain; its full sequence is LAAVSVDCSEYPKPACTLEYRPLCGSDNKTYGNKCNFCNAVVESNGTLTLSHFGKC.

The Kazal-like domain occupies 6 to 56 (VDCSEYPKPACTLEYRPLCGSDNKTYGNKCNFCNAVVESNGTLTLSHFGKC). Intrachain disulfides connect C8–C38, C16–C35, and C24–C56. The N-linked (GlcNAc...) asparagine glycan is linked to N45.

It is found in the secreted. This is Ovomucoid from Meleagris ocellata (Ocellated turkey).